Here is a 158-residue protein sequence, read N- to C-terminus: MSYTITDPSKLAYLSSAWADPNSLINLCTNSLGNQFQTQQARTTVQQQFADVWQPVPTLTSRFPAGAGHFRVYRYEPILEPLITFLMGTFDTRNRIIEVRNPQNPTTTETLDATRRVDDATVAIRSAINNLLNELVRGNGMYNQVSFETMSGLTWTSS.

S2 bears the N-acetylserine; by host mark.

Belongs to the virgaviridae capsid protein family.

The protein localises to the virion. Its function is as follows. Capsid protein self-assembles to form rod-shaped virions about 18 nm in diameter with a central canal enclosing the viral genomic RNA. The sequence is that of Capsid protein (CP) from Odontoglossum ringspot virus (isolate Korean Cy) (ORSV-Cy).